The chain runs to 304 residues: Bifunctional protein FolD (304 aa).

NADP(+)-binding positions include 170-172 (GRS), serine 195, and isoleucine 236.

The protein belongs to the tetrahydrofolate dehydrogenase/cyclohydrolase family. As to quaternary structure, homodimer.

The enzyme catalyses (6R)-5,10-methylene-5,6,7,8-tetrahydrofolate + NADP(+) = (6R)-5,10-methenyltetrahydrofolate + NADPH. The catalysed reaction is (6R)-5,10-methenyltetrahydrofolate + H2O = (6R)-10-formyltetrahydrofolate + H(+). The protein operates within one-carbon metabolism; tetrahydrofolate interconversion. Its function is as follows. Catalyzes the oxidation of 5,10-methylenetetrahydrofolate to 5,10-methenyltetrahydrofolate and then the hydrolysis of 5,10-methenyltetrahydrofolate to 10-formyltetrahydrofolate. This Anaplasma phagocytophilum (strain HZ) protein is Bifunctional protein FolD.